A 228-amino-acid polypeptide reads, in one-letter code: Prolactin-2B1 (228 aa).

An N-terminal signal peptide occupies residues 1–31; that stretch reads MLLYLPQIFSSRASSLLFLVPYLLFWENVAS. 2 cysteine pairs are disulfide-bonded: cysteine 89–cysteine 194 and cysteine 203–cysteine 228. N-linked (GlcNAc...) asparagine glycosylation is present at asparagine 173.

This sequence belongs to the somatotropin/prolactin family. Expression restricted to the placenta in trophoblast cells within the labyrinth zone.

It is found in the secreted. The polypeptide is Prolactin-2B1 (Prl2b1) (Rattus norvegicus (Rat)).